The sequence spans 131 residues: Small ribosomal subunit protein uS8 (131 aa).

The protein belongs to the universal ribosomal protein uS8 family. Part of the 30S ribosomal subunit. Contacts proteins S5 and S12.

In terms of biological role, one of the primary rRNA binding proteins, it binds directly to 16S rRNA central domain where it helps coordinate assembly of the platform of the 30S subunit. This is Small ribosomal subunit protein uS8 from Phocaeicola vulgatus (strain ATCC 8482 / DSM 1447 / JCM 5826 / CCUG 4940 / NBRC 14291 / NCTC 11154) (Bacteroides vulgatus).